The primary structure comprises 316 residues: Pantothenate kinase (316 aa).

Residue 95–102 participates in ATP binding; that stretch reads GSVAVGKS.

It belongs to the prokaryotic pantothenate kinase family.

It localises to the cytoplasm. It carries out the reaction (R)-pantothenate + ATP = (R)-4'-phosphopantothenate + ADP + H(+). The protein operates within cofactor biosynthesis; coenzyme A biosynthesis; CoA from (R)-pantothenate: step 1/5. This is Pantothenate kinase from Enterobacter sp. (strain 638).